The following is a 663-amino-acid chain: Transforming growth factor beta activator LRRC32 (663 aa).

Residues 1–17 (MSHQILLLLAMLTLGLA) form the signal peptide. Over 18-628 (ISQRREQVPC…CEKGGLKNVN (611 aa)) the chain is Extracellular. Residues 22-49 (REQVPCRTVNKEALCHGLGLLQVPSVLS) enclose the LRRNT domain. LRR repeat units follow at residues 49–72 (SLDI…PLGF), 73–96 (YTAL…VFQA), 98–123 (PYLE…GLGR), 125–148 (PLLV…LLGE), 149–172 (TPRL…TFWG), 174–196 (PAVE…AFEA), 197–220 (LPHL…SLQQ), 222–241 (QVLD…PEPQ), 243–267 (QFQL…VFPR), and 269–287 (IYLN…LPRG). N-linked (GlcNAc...) asparagine glycosylation is present at asparagine 204. N-linked (GlcNAc...) asparagine glycans are attached at residues asparagine 272, asparagine 305, and asparagine 309. The interval 291–311 (LHAPSEGWSASPLSNPSRNAS) is disordered. Polar residues predominate over residues 301–311 (SPLSNPSRNAS). LRR repeat units lie at residues 315–338 (LSQL…FLEH), 340–362 (TSLR…QVDS), 363–386 (LPCL…TKVL), 387–409 (GSLQ…TFAS), 411–433 (ASLQ…AEPG), 443–466 (IPTL…SFLH), 468–489 (PLTE…ALVG), 491–514 (EASL…LPCF), 515–539 (LRLK…AVSL), 541–559 (VLDL…AMGG), and 561–584 (ETSL…WLAA). Asparagine 346 is a glycosylation site (N-linked (GlcNAc...) asparagine). A glycan (N-linked (GlcNAc...) asparagine) is linked at asparagine 546. Residues 572–621 (NPLSCCGNGWLAAQLHQGRVDVDATQDLICRFGSQEELSLSLVRPEDCEK) enclose the LRRCT domain. Residues 629 to 649 (LILLLSFTLVSAIVLTTLATI) traverse the membrane as a helical segment. Over 650 to 663 (CFLRRQKLSQQYKA) the chain is Cytoplasmic.

Belongs to the LRRC32/LRRC33 family. Interacts with TGFB1; associates via disulfide bonds with the Latency-associated peptide chain (LAP) regulatory chain of TGFB1, leading to regulate activation of TGF-beta-1. Interacts with TGFB2. Interacts with TGFB3; associates via disulfide bonds with the Latency-associated peptide chain (LAP) regulatory chain of TGFB3, leading to regulate activation of TGF-beta-3. Interacts with LAPTM4B; decreases TGFB1 production in regulatory T-cells. Present in medial edge epithelial cells at 14.5 dpc (at protein level).

Its subcellular location is the cell membrane. It localises to the cell surface. Key regulator of transforming growth factor beta (TGFB1, TGFB2 and TGFB3) that controls TGF-beta activation by maintaining it in a latent state during storage in extracellular space. Associates specifically via disulfide bonds with the Latency-associated peptide (LAP), which is the regulatory chain of TGF-beta, and regulates integrin-dependent activation of TGF-beta. Able to outcompete LTBP1 for binding to LAP regulatory chain of TGF-beta. Controls activation of TGF-beta-1 (TGFB1) on the surface of activated regulatory T-cells (Tregs). Required for epithelial fusion during palate development by regulating activation of TGF-beta-3 (TGFB3). The protein is Transforming growth factor beta activator LRRC32 of Mus musculus (Mouse).